Consider the following 433-residue polypeptide: MRINVESLSSIKKKINFEIPSERVASEVEKAYGEIRKHAAIKGFRKGKVPKDLLVKHFSDKMADDVLKNIINDTYFKALMDENIYPVSHPVIESDELKVGESFKYSATVEIFPDVVVKDYTGLEVKKEKYVFNEEVIANRLKEMQENMSHLEPADAQHSAMNGDFVTFDFKGFVGGEPFDGGAAEDYQLELGSGRFIPGFEDQIVGMKVGDEGEIKVTFPENYGQKDLAGKEATFAVTIKEIKVKELPELNDDFAKDFGEFESLDQLKAKISEVYALQENERIETELRERLIKALIDKNNFEVPETLIDKQLNLMLENSKKRLAMQRLTMEMMGLNDEGYKIQFRSVAETQVKGSLLLEALARQESIQVADDDLDAKIKEIAAQNNQELETVNNFYQQNAQAKENLTAQLKEDKVVDFLLAKAKIDEVDRSEI.

The PPIase FKBP-type domain maps to 163-248 (GDFVTFDFKG…IKEIKVKELP (86 aa)).

It belongs to the FKBP-type PPIase family. Tig subfamily.

It localises to the cytoplasm. It carries out the reaction [protein]-peptidylproline (omega=180) = [protein]-peptidylproline (omega=0). Functionally, involved in protein export. Acts as a chaperone by maintaining the newly synthesized protein in an open conformation. Functions as a peptidyl-prolyl cis-trans isomerase. This chain is Trigger factor, found in Geotalea uraniireducens (strain Rf4) (Geobacter uraniireducens).